Here is a 469-residue protein sequence, read N- to C-terminus: Regulator of G-protein signaling 7 (469 aa).

Positions 37-112 (EKNGIPIRTV…DDGTFYRFQT (76 aa)) constitute a DEP domain. A phosphoserine mark is found at serine 229 and serine 241. Residues 235-256 (NDIRSHSPTHTPTPETKPPTED) are disordered. The residue at position 243 (threonine 243) is a Phosphothreonine. Residues 255–316 (EDELQQQIKY…LSDDTTFWEL (62 aa)) enclose the G protein gamma domain. An RGS domain is found at 333 to 448 (GMDEALKDPV…IRSSAYQELL (116 aa)). A Phosphoserine modification is found at serine 434.

As to quaternary structure, interacts with GNB5, forming the RGS7-GNB5 complex. Interacts with GPR158; promotes the GTPase activator activity of the RGS7-GNB5 complex in absence of glycine, in contrast GTPase activator activity of the RGS7-GNB5 complex is inhibited in presence of glycine. Interacts with GPR179. Interacts with PKD1; this prevents rapid proteasomal degradation. Interacts with RGS7BP, leading to regulate the subcellular location of the heterodimer formed with GNB5. Interacts (phosphorylated form) with 14-3-3 protein YWHAQ. Interacts with SNAPIN. Interacts with GNAI1. Interacts with GNAO1, GNAI3 and GNAZ. Post-translationally, palmitoylated. Ubiquitinated, leading to rapid proteasomal degradation. In terms of processing, phosphorylation and subsequent interaction with 14-3-3 proteins inhibits GAP activity. In terms of tissue distribution, detected in retina (at protein level).

The protein resides in the cytoplasm. Its subcellular location is the cytosol. It localises to the cell membrane. The protein localises to the membrane. In terms of biological role, GTPase activator component of the RGS7-GNB5 complex that regulates G protein-coupled receptor signaling cascades. The RGS7-GNB5 complex acts as an inhibitor signal transduction by promoting the GTPase activity of G protein alpha subunits, such as GNAO1, thereby driving them into their inactive GDP-bound form. May play a role in synaptic vesicle exocytosis. Glycine-dependent regulation of the RGS7-GNB5 complex by GPR158 affects mood and cognition via its ability to regulate neuronal excitability in L2/L3 pyramidal neurons of the prefrontal cortex. Modulates the activity of potassium channels that are activated by GNAO1 in response to muscarinic acetylcholine receptor M2/CHRM2 signaling. In Bos taurus (Bovine), this protein is Regulator of G-protein signaling 7 (RGS7).